Consider the following 245-residue polypeptide: Adenylate kinase (245 aa).

15–20 (GSGKGT) is a binding site for ATP. Positions 35–64 (SSGDLLRGAVSKDTPLSQEIKSYLDQGKLL) are NMP. Residues serine 36, arginine 41, 62-64 (KLL), 103-106 (GFPR), and glutamine 110 each bind AMP. An LID region spans residues 143-176 (SRYICPACQGIYNEQQGFSSCPKCSVELIRRSDD). ATP is bound at residue arginine 144. Cysteine 147 and cysteine 150 together coordinate Zn(2+). Residue 153–154 (IY) participates in ATP binding. 2 residues coordinate Zn(2+): cysteine 163 and cysteine 166. AMP-binding residues include arginine 173 and arginine 184. An ATP-binding site is contributed by alanine 212.

The protein belongs to the adenylate kinase family. As to quaternary structure, monomer.

Its subcellular location is the cytoplasm. The catalysed reaction is AMP + ATP = 2 ADP. The protein operates within purine metabolism; AMP biosynthesis via salvage pathway; AMP from ADP: step 1/1. In terms of biological role, catalyzes the reversible transfer of the terminal phosphate group between ATP and AMP. Plays an important role in cellular energy homeostasis and in adenine nucleotide metabolism. The polypeptide is Adenylate kinase (Chlamydia trachomatis serovar L2 (strain ATCC VR-902B / DSM 19102 / 434/Bu)).